A 470-amino-acid polypeptide reads, in one-letter code: MSSQQHKFKRPDVSVRDKKLDTLNVQLKKIDTEIGLIRKQIDQHQVNDTTQQERKKLQDKNKEIIKIQADLKTRRSNIHDSIKQLDAQIKRKNNQIEEKLGKKAKFSSTAEAKQRINEIEESIASGDLSLVQEKLLVKEMQSLNKLIKDLVNIEPIRKSVDADKAKINQLKEELNGLNPKDVSNQFEENQQKLNDIHSKTQGVYDKRQTLFNKRAALYKKRDELYSQIRQIRADFDNEFKSFRAKLDKERLKREEEQRLSKLLEQKDVDMGKLQEKLTHAKIPAFTYEIGAIENSLLVLDPTYVKPKKNILPDLSSNALETKPARKVVADDLVLVTPKKDDFVNVAPSKSKKYKKKNQQKNTENEQPASIFNKVDGKFTLEPTLIATLAELDVTVPINSDDVKITVEQLKKKHEELLSKQEEQTKQNIESVEKEIEKLNLDYSNKEQQVKKELEEKRLKEQEESEKDKEN.

Coiled-coil stretches lie at residues 17–178 and 237–281; these read DKKL…NGLN and NEFK…THAK. Serine 260 is subject to Phosphoserine. Threonine 336 is subject to Phosphothreonine. The interval 346–368 is disordered; it reads APSKSKKYKKKNQQKNTENEQPA. The span at 349–358 shows a compositional bias: basic residues; that stretch reads KSKKYKKKNQ. Serine 369 bears the Phosphoserine mark. Positions 398-469 form a coiled coil; the sequence is NSDDVKITVE…EQEESEKDKE (72 aa). The interval 447 to 470 is disordered; sequence QQVKKELEEKRLKEQEESEKDKEN.

In terms of biological role, implicated in secretion, nuclear segregation and in maintenance of cell size. This Saccharomyces cerevisiae (strain ATCC 204508 / S288c) (Baker's yeast) protein is Nuclear segregation protein BFR1 (BFR1).